A 436-amino-acid polypeptide reads, in one-letter code: Elongation factor 1-gamma-A (436 aa).

One can recognise a GST N-terminal domain in the interval 2–87; it reads AGGTLYTYPD…YVGNDELRGT (86 aa). The GST C-terminal domain occupies 88–221; the sequence is TRLHQAQVIQ…KMAQFDAKKF (134 aa). 2 stretches are compositionally biased toward basic and acidic residues: residues 221–249 and 265–278; these read FAEM…EKKK and SEKA…SKDP. A disordered region spans residues 221–278; sequence FAEMQPKKETPKKEKPAKEPKKEKEEKKKAAPTPAPAPEDDLDESEKALAAEPKSKDP. An EF-1-gamma C-terminal domain is found at 275 to 436; it reads SKDPYAHLPK…KPFNQGKIFK (162 aa).

In terms of assembly, EF-1 is composed of four subunits: alpha, beta, delta, and gamma. In terms of processing, phosphorylated by CDK1. The N-terminus is blocked.

In terms of biological role, probably plays a role in anchoring the complex to other cellular components. This Xenopus laevis (African clawed frog) protein is Elongation factor 1-gamma-A (eef1g-a).